A 194-amino-acid polypeptide reads, in one-letter code: Fe/S biogenesis protein NfuA (194 aa).

The [4Fe-4S] cluster site is built by Cys152 and Cys155.

Belongs to the NfuA family. Homodimer. [4Fe-4S] cluster serves as cofactor.

Functionally, involved in iron-sulfur cluster biogenesis. Binds a 4Fe-4S cluster, can transfer this cluster to apoproteins, and thereby intervenes in the maturation of Fe/S proteins. Could also act as a scaffold/chaperone for damaged Fe/S proteins. This chain is Fe/S biogenesis protein NfuA, found in Pseudomonas putida (strain ATCC 700007 / DSM 6899 / JCM 31910 / BCRC 17059 / LMG 24140 / F1).